The following is a 127-amino-acid chain: Small ribosomal subunit protein uS12 (127 aa).

The residue at position 89 (Asp89) is a 3-methylthioaspartic acid.

The protein belongs to the universal ribosomal protein uS12 family. Part of the 30S ribosomal subunit. Contacts proteins S8 and S17. May interact with IF1 in the 30S initiation complex.

In terms of biological role, with S4 and S5 plays an important role in translational accuracy. Its function is as follows. Interacts with and stabilizes bases of the 16S rRNA that are involved in tRNA selection in the A site and with the mRNA backbone. Located at the interface of the 30S and 50S subunits, it traverses the body of the 30S subunit contacting proteins on the other side and probably holding the rRNA structure together. The combined cluster of proteins S8, S12 and S17 appears to hold together the shoulder and platform of the 30S subunit. The protein is Small ribosomal subunit protein uS12 of Nautilia profundicola (strain ATCC BAA-1463 / DSM 18972 / AmH).